Consider the following 283-residue polypeptide: GTP cyclohydrolase MptA (283 aa).

It belongs to the GTP cyclohydrolase IV family. Homodimer. Requires Fe(2+) as cofactor.

The catalysed reaction is GTP + H2O = 7,8-dihydroneopterin 2',3'-cyclic phosphate + formate + diphosphate + H(+). It functions in the pathway cofactor biosynthesis; 5,6,7,8-tetrahydromethanopterin biosynthesis. Functionally, converts GTP to 7,8-dihydro-D-neopterin 2',3'-cyclic phosphate, the first intermediate in the biosynthesis of coenzyme methanopterin. In Aeropyrum pernix (strain ATCC 700893 / DSM 11879 / JCM 9820 / NBRC 100138 / K1), this protein is GTP cyclohydrolase MptA.